Consider the following 230-residue polypeptide: Antiholin-like protein LrgB (230 aa).

Helical transmembrane passes span 5–25 (MTPY…TLLF), 30–50 (GFFL…FLKV), 61–81 (GGKM…IPLY), 92–112 (WQIL…VFIV), 149–169 (ITSF…ALFL), 177–197 (PIAK…AVGI), and 209–229 (IAVT…MPFI).

The protein belongs to the CidB/LrgB family. LrgB subfamily.

The protein localises to the cell membrane. Functionally, inhibits the expression or activity of extracellular murein hydrolases by interacting, possibly with LrgA, with the holin-like protein CidA. The LrgAB and CidA proteins may affect the proton motive force of the membrane. May be involved in programmed cell death (PCD), possibly triggering PCD in response to antibiotics and environmental stresses. The chain is Antiholin-like protein LrgB from Bacillus cereus (strain Q1).